Consider the following 272-residue polypeptide: Prohibitin 1 (272 aa).

A2 carries the post-translational modification N-acetylalanine. T91 bears the Phosphothreonine mark. K128 and K186 each carry N6-acetyllysine. Positions K177 to I211 form a coiled coil. An N6-acetyllysine; alternate modification is found at K202. An N6-succinyllysine; alternate modification is found at K202. Y249 is modified (phosphotyrosine).

The protein belongs to the prohibitin family. Interacts with PHB2. Interacts with STOML2. Interacts with CD86 (via cytoplasmic domain); the interactions increases after priming with CD40. As to quaternary structure, (Microbial infection) Interacts with human enterovirus 71/EV-71 capsid protein VP0, protein 3CD and protease 3C. As to expression, widely expressed in different tissues.

It localises to the mitochondrion inner membrane. The protein localises to the nucleus. The protein resides in the cell membrane. Its subcellular location is the cytoplasm. With respect to regulation, target of the anti-cancer drug Rocaglamide (Roc-A). Its function is as follows. Protein with pleiotropic attributes mediated in a cell-compartment- and tissue-specific manner, which include the plasma membrane-associated cell signaling functions, mitochondrial chaperone, and transcriptional co-regulator of transcription factors in the nucleus. Plays a role in adipose tissue and glucose homeostasis in a sex-specific manner. Contributes to pulmonary vascular remodeling by accelerating proliferation of pulmonary arterial smooth muscle cells. Functionally, in the mitochondria, together with PHB2, forms large ring complexes (prohibitin complexes) in the inner mitochondrial membrane (IMM) and functions as a chaperone protein that stabilizes mitochondrial respiratory enzymes and maintains mitochondrial integrity in the IMM, which is required for mitochondrial morphogenesis, neuronal survival, and normal lifespan. The prohibitin complex, with DNAJC19, regulates cardiolipin remodeling and the protein turnover of OMA1 in a cardiolipin-binding manner. Regulates mitochondrial respiration activity playing a role in cellular aging. The prohibitin complex plays a role of mitophagy receptor involved in targeting mitochondria for autophagic degradation. Involved in mitochondrial-mediated antiviral innate immunity, activates RIG-I-mediated signal transduction and production of IFNB1 and pro-inflammatory cytokine IL6. In terms of biological role, in the nucleus, acts as a transcription coregulator, enhances promoter binding by TP53, a transcription factor it activates, but reduces the promoter binding by E2F1, a transcription factor it represses. Interacts with STAT3 to affect IL17 secretion in T-helper Th17 cells. In the plasma membrane, cooperates with CD86 to mediate CD86-signaling in B lymphocytes that regulates the level of IgG1 produced through the activation of distal signaling intermediates. Upon CD40 engagement, required to activate NF-kappa-B signaling pathway via phospholipase C and protein kinase C activation. Its function is as follows. (Microbial infection) In neuronal cells, cell surface-expressed PHB1 is involved in human enterovirus 71/EV-71 entry into neuronal cells specifically, while membrane-bound mitochondrial PHB1 associates with the virus replication complex and facilitates viral replication. May serve as a receptor for EV71. This Mus musculus (Mouse) protein is Prohibitin 1 (Phb1).